Here is an 88-residue protein sequence, read N- to C-terminus: MAQVVWTWRALADLTAIRDYIGQFSPLAAQRMALRLKTAADSLAEYPERGRLATATLRELVVVPPYVIRYYVADGLVHIVRIRHAARL.

This sequence belongs to the RelE toxin family.

Toxic component of a type II toxin-antitoxin (TA) system. Its toxic effect is neutralized by coexpression with cognate antitoxin RelB2 but no other ParD or RelB antitoxin. The chain is Toxin RelE2 (relE2) from Caulobacter vibrioides (strain ATCC 19089 / CIP 103742 / CB 15) (Caulobacter crescentus).